Here is a 612-residue protein sequence, read N- to C-terminus: Cytoplasmic dynein 1 intermediate chain 2 (612 aa).

2 stretches are compositionally biased toward basic and acidic residues: residues 1 to 13 (MSDK…ELER) and 20 to 43 (QIRE…KKEA). Disordered regions lie at residues 1–117 (MSDK…MAKI) and 129–188 (TYTK…EEKQ). At Ser-2 the chain carries N-acetylserine. Ser-51 is subject to Diphosphoserine. 2 positions are modified to phosphoserine: Ser-51 and Ser-84. Over residues 82-91 (PSSKSVSTPS) the composition is skewed to low complexity. Thr-89 is modified (phosphothreonine). Phosphoserine occurs at positions 91, 95, and 98. The segment covering 164 to 188 (EKTLKKDEESDSKAPPHELTEEEKQ) has biased composition (basic and acidic residues). 7 WD repeats span residues 251–300 (SKHR…TTPE), 304–344 (HCQS…RTPV), 353–394 (AHTH…HPQD), 403–443 (SKAV…AGIS), 448–493 (GHQG…PLYS), 496–536 (DNSD…EVPT), and 542–581 (EGNP…AVPR).

This sequence belongs to the dynein intermediate chain family. As to quaternary structure, homodimer. The cytoplasmic dynein 1 complex consists of two catalytic heavy chains (HCs) and a number of non-catalytic subunits presented by intermediate chains (ICs), light intermediate chains (LICs) and light chains (LCs); the composition seems to vary in respect to the IC, LIC and LC composition. The heavy chain homodimer serves as a scaffold for the probable homodimeric assembly of the respective non-catalytic subunits. The ICs and LICs bind directly to the HC dimer and the LCs assemble on the IC dimer. Interacts with DYNLT3. Interacts with DYNLT1. Interacts (dephosphorylated at Ser-84) with DCTN1. Interacts with BICD2. Interacts with SPEF2. Interacts with CFAP61. Post-translationally, the phosphorylation status of Ser-84 appears to be involved in dynactin-dependent target binding. Pyrophosphorylation by 5-diphosphoinositol pentakisphosphate (5-IP7) promotes interaction with DCTN1. Serine pyrophosphorylation is achieved by Mg(2+)-dependent, but enzyme independent transfer of a beta-phosphate from a inositol pyrophosphate to a pre-phosphorylated serine residue.

Its subcellular location is the cytoplasm. It is found in the cytoskeleton. Its function is as follows. Acts as one of several non-catalytic accessory components of the cytoplasmic dynein 1 complex that are thought to be involved in linking dynein to cargos and to adapter proteins that regulate dynein function. Cytoplasmic dynein 1 acts as a motor for the intracellular retrograde motility of vesicles and organelles along microtubules. The intermediate chains mediate the binding of dynein to dynactin via its 150 kDa component (p150-glued) DCTN1. Involved in membrane-transport, such as Golgi apparatus, late endosomes and lysosomes. The protein is Cytoplasmic dynein 1 intermediate chain 2 (DYNC1I2) of Bos taurus (Bovine).